The chain runs to 242 residues: HTH-type transcriptional regulator GadW (242 aa).

In terms of domain architecture, HTH araC/xylS-type spans 139–236 (GKVERLISFD…GVTPHQFAQH (98 aa)). 2 consecutive DNA-binding regions (H-T-H motif) follow at residues 156-177 (RDIA…QDEN) and 203-226 (LHTI…RQYY).

In terms of assembly, homodimer.

Functionally, depending on the conditions (growth phase and medium), acts as a positive or negative regulator of gadA and gadBC. Repression occurs directly or via the repression of the expression of gadX. Activation occurs directly by the binding of GadW to the gadA and gadBC promoters. The polypeptide is HTH-type transcriptional regulator GadW (gadW) (Escherichia coli (strain K12)).